We begin with the raw amino-acid sequence, 110 residues long: Large ribosomal subunit protein uL22 (110 aa).

This sequence belongs to the universal ribosomal protein uL22 family. Part of the 50S ribosomal subunit.

Functionally, this protein binds specifically to 23S rRNA; its binding is stimulated by other ribosomal proteins, e.g. L4, L17, and L20. It is important during the early stages of 50S assembly. It makes multiple contacts with different domains of the 23S rRNA in the assembled 50S subunit and ribosome. Its function is as follows. The globular domain of the protein is located near the polypeptide exit tunnel on the outside of the subunit, while an extended beta-hairpin is found that lines the wall of the exit tunnel in the center of the 70S ribosome. In Shewanella baltica (strain OS223), this protein is Large ribosomal subunit protein uL22.